The chain runs to 782 residues: LINE-1 type transposase domain-containing protein 1 (782 aa).

Disordered regions lie at residues 1-30 (MSGVQSKAARLQKERKEKLSADRERKTATS), 90-200 (QEGD…GGAG), and 338-397 (NKGT…SAEE). 2 stretches are compositionally biased toward basic and acidic residues: residues 11 to 27 (LQKERKEKLSADRERKT) and 95 to 107 (ISERPKPGEKVEE). The residue at position 136 (S136) is a Phosphoserine. 2 stretches are compositionally biased toward basic and acidic residues: residues 143-158 (SLERGGEALRGEHGRC) and 183-194 (EENRLKAPKESP). The span at 347–396 (GEEEEISETQGEETSEGETSELGEEEGSESEEEEESSESEEEEESSESAE) shows a compositional bias: acidic residues. Residues S407, S409, S442, S478, S490, S559, and S567 each carry the phosphoserine modification.

The protein belongs to the transposase 22 family.

The chain is LINE-1 type transposase domain-containing protein 1 (L1td1) from Mus musculus (Mouse).